Here is a 404-residue protein sequence, read N- to C-terminus: Floricaula/leafy-like protein FL1 (404 aa).

The segment at 210-251 is disordered; it reads IGVPEHSSESDERKADTNKQKRRRSKEPGEDGEDRPREHPFI. 2 stretches are compositionally biased toward basic and acidic residues: residues 215–228 and 235–249; these read HSSE…DTNK and KEPG…REHP. 3 DNA-binding regions span residues 246–250, 315–322, and 386–389; these read REHPF, NKPKMRHY, and YVPT.

This sequence belongs to the FLO/LFY family. Expressed in both male and female cones, vegetative buds and needles, but not in the roots.

The protein resides in the nucleus. In terms of biological role, probable transcription factor. The chain is Floricaula/leafy-like protein FL1 from Pinus radiata (Monterey pine).